We begin with the raw amino-acid sequence, 477 residues long: Ribulose bisphosphate carboxylase large chain (477 aa).

A propeptide spanning residues 1–2 (MS) is cleaved from the precursor. The residue at position 3 (Pro-3) is an N-acetylproline. The residue at position 14 (Lys-14) is an N6,N6,N6-trimethyllysine. Residues Asn-123 and Thr-173 each coordinate substrate. Lys-175 acts as the Proton acceptor in catalysis. Position 177 (Lys-177) interacts with substrate. 3 residues coordinate Mg(2+): Lys-201, Asp-203, and Glu-204. N6-carboxylysine is present on Lys-201. The active-site Proton acceptor is His-294. Arg-295, His-327, and Ser-379 together coordinate substrate.

Belongs to the RuBisCO large chain family. Type I subfamily. As to quaternary structure, heterohexadecamer of 8 large chains and 8 small chains; disulfide-linked. The disulfide link is formed within the large subunit homodimers. Requires Mg(2+) as cofactor. The disulfide bond which can form in the large chain dimeric partners within the hexadecamer appears to be associated with oxidative stress and protein turnover.

The protein resides in the plastid. Its subcellular location is the chloroplast. The enzyme catalyses 2 (2R)-3-phosphoglycerate + 2 H(+) = D-ribulose 1,5-bisphosphate + CO2 + H2O. It carries out the reaction D-ribulose 1,5-bisphosphate + O2 = 2-phosphoglycolate + (2R)-3-phosphoglycerate + 2 H(+). RuBisCO catalyzes two reactions: the carboxylation of D-ribulose 1,5-bisphosphate, the primary event in carbon dioxide fixation, as well as the oxidative fragmentation of the pentose substrate in the photorespiration process. Both reactions occur simultaneously and in competition at the same active site. This is Ribulose bisphosphate carboxylase large chain from Nicotiana tomentosiformis (Tobacco).